Reading from the N-terminus, the 508-residue chain is Protein FAM217A (508 aa).

This sequence belongs to the FAM217 family.

The protein is Protein FAM217A (FAM217A) of Homo sapiens (Human).